A 158-amino-acid polypeptide reads, in one-letter code: 6,7-dimethyl-8-ribityllumazine synthase (158 aa).

5-amino-6-(D-ribitylamino)uracil is bound by residues Phe-22, 56–58, and 80–82; these read ALE and VVI. A (2S)-2-hydroxy-3-oxobutyl phosphate-binding site is contributed by 85-86; sequence ET. The Proton donor role is filled by His-88. Asn-113 is a binding site for 5-amino-6-(D-ribitylamino)uracil. Arg-127 contacts (2S)-2-hydroxy-3-oxobutyl phosphate.

It belongs to the DMRL synthase family.

It carries out the reaction (2S)-2-hydroxy-3-oxobutyl phosphate + 5-amino-6-(D-ribitylamino)uracil = 6,7-dimethyl-8-(1-D-ribityl)lumazine + phosphate + 2 H2O + H(+). Its pathway is cofactor biosynthesis; riboflavin biosynthesis; riboflavin from 2-hydroxy-3-oxobutyl phosphate and 5-amino-6-(D-ribitylamino)uracil: step 1/2. Its function is as follows. Catalyzes the formation of 6,7-dimethyl-8-ribityllumazine by condensation of 5-amino-6-(D-ribitylamino)uracil with 3,4-dihydroxy-2-butanone 4-phosphate. This is the penultimate step in the biosynthesis of riboflavin. This is 6,7-dimethyl-8-ribityllumazine synthase from Neisseria meningitidis serogroup C / serotype 2a (strain ATCC 700532 / DSM 15464 / FAM18).